The chain runs to 141 residues: MATIKVDVVSAEEQIFSGEAKFVALPGETGELGILPGHTPLITRIRPGAVRIEVEGGNDEFVFVAGGILEVQPGAVTVLADTAIRGKDLDAAKAEEARKRAEETLQNAKSDLDLAKAQSELATAMAQLEAIQRLAKIRSRH.

It belongs to the ATPase epsilon chain family. As to quaternary structure, F-type ATPases have 2 components, CF(1) - the catalytic core - and CF(0) - the membrane proton channel. CF(1) has five subunits: alpha(3), beta(3), gamma(1), delta(1), epsilon(1). CF(0) has three main subunits: a, b and c.

Its subcellular location is the cell inner membrane. Its function is as follows. Produces ATP from ADP in the presence of a proton gradient across the membrane. This Burkholderia ambifaria (strain ATCC BAA-244 / DSM 16087 / CCUG 44356 / LMG 19182 / AMMD) (Burkholderia cepacia (strain AMMD)) protein is ATP synthase epsilon chain.